The primary structure comprises 183 residues: Large ribosomal subunit protein uL6 (183 aa).

The protein belongs to the universal ribosomal protein uL6 family. Part of the 50S ribosomal subunit.

Its function is as follows. This protein binds to the 23S rRNA, and is important in its secondary structure. It is located near the subunit interface in the base of the L7/L12 stalk, and near the tRNA binding site of the peptidyltransferase center. This Malacoplasma penetrans (strain HF-2) (Mycoplasma penetrans) protein is Large ribosomal subunit protein uL6.